Consider the following 219-residue polypeptide: uncharacterized protein (219 aa).

Positions 1–17 are enriched in low complexity; sequence MIINNQNSPQSINTPSS. The disordered stretch occupies residues 1–31; the sequence is MIINNQNSPQSINTPSSVSSRQHINKSKKKK. 2 helical membrane-spanning segments follow: residues 49–69 and 83–105; these read SLAT…LVCK and LVYR…SYIG. The interval 135–219 is disordered; it reads NHRSPIPLTN…NSDLEIPIPI (85 aa). The span at 144–212 shows a compositional bias: low complexity; that stretch reads NLNNNNNNNN…SNNNNDNNSD (69 aa).

It is found in the membrane. This is an uncharacterized protein from Dictyostelium discoideum (Social amoeba).